We begin with the raw amino-acid sequence, 154 residues long: Acidic phospholipase A2 1 (154 aa).

The N-terminal stretch at 1–19 (MHPAHLLVLLGVCVSLLGA) is a signal peptide. A propeptide spanning residues 20-27 (ARIPPLPL) is cleaved from the precursor. 7 disulfide bridges follow: C38–C104, C54–C153, C56–C72, C71–C132, C78–C125, C88–C118, and C111–C123. Residues F55, G57, and G59 each coordinate Ca(2+). H75 is an active-site residue. D76 is a Ca(2+) binding site. Residue D126 is part of the active site.

It belongs to the phospholipase A2 family. Group I subfamily. D49 sub-subfamily. As to quaternary structure, monomer. Ca(2+) is required as a cofactor. As to expression, expressed by the venom gland.

It is found in the secreted. It carries out the reaction a 1,2-diacyl-sn-glycero-3-phosphocholine + H2O = a 1-acyl-sn-glycero-3-phosphocholine + a fatty acid + H(+). Functionally, snake venom phospholipase A2 (PLA2) that shows moderate enzymatic activity and exhibits procoagulant activity. PLA2 catalyzes the calcium-dependent hydrolysis of the 2-acyl groups in 3-sn-phosphoglycerides. This Pseudonaja textilis (Eastern brown snake) protein is Acidic phospholipase A2 1.